We begin with the raw amino-acid sequence, 338 residues long: MGKLTLLQCLSGHRGRVWGAGWHPRDPVLATCGEDKTIRIWADDGTGRWVPKTVLSDGHTRTIRDVAWSPCGRFLASASFDATVAIWDRRSGEFECNATLEGHENEVKSVSWSKSGALLATCSRDKSVWIWEVAQEDEYECAAVLNTHSQDVKKVEWHPNEDVLASASYDNTIQLYREDLADSDWSSFDTLASHDSTVWSIAFDASGSRLASCSDDQTVRIWQEYKPGNEFGVACPDGKTPVWKCVCTLSGFHSRAVYDISWCKKTGLIATACGDDMVRIFREVAGSPANEPTFEMVASKHAHSQDANTVEWSPTVAGLLVTTSDDGDVKLWKFEDDE.

8 WD repeats span residues 12-51, 58-97, 102-141, 147-186, 193-232, 234-252, 253-291, and 302-338; these read GHRGRVWGAGWHPRDPVLATCGEDKTIRIWADDGTGRWVP, GHTRTIRDVAWSPCGRFLASASFDATVAIWDRRSGEFECN, GHENEVKSVSWSKSGALLATCSRDKSVWIWEVAQEDEYEC, THSQDVKKVEWHPNEDVLASASYDNTIQLYREDLADSDWS, SHDSTVWSIAFDASGSRLASCSDDQTVRIWQEYKPGNEFG, ACPDGKTPVWKCVCTLSGF, HSRAVYDISWCKKTGLIATACGDDMVRIFREVAGSPANE, and AHSQDANTVEWSPTVAGLLVTTSDDGDVKLWKFEDDE.

It belongs to the WD repeat CIA1 family.

Functionally, essential component of the cytosolic iron-sulfur (Fe/S) protein assembly machinery. Required for the maturation of extramitochondrial Fe/S proteins. This is Probable cytosolic iron-sulfur protein assembly protein Ciao1 from Culex quinquefasciatus (Southern house mosquito).